A 665-amino-acid chain; its full sequence is Coiled-coil domain-containing protein 138 (665 aa).

The residue at position 48 (Thr48) is a Phosphothreonine. At Ser49 the chain carries Phosphoserine. The stretch at 198–323 (QQKFAEELQK…YEFMTIQRLK (126 aa)) forms a coiled coil. Phosphoserine is present on Ser469.

The sequence is that of Coiled-coil domain-containing protein 138 (CCDC138) from Macaca fascicularis (Crab-eating macaque).